The chain runs to 961 residues: Ras-interacting protein 1 (961 aa).

A compositionally biased stretch (basic and acidic residues) spans 1-10 (MLSGERKEGG). 3 disordered regions span residues 1 to 21 (MLSG…HLPV), 35 to 70 (LGRR…PHVE), and 96 to 116 (RGSG…QRWA). Over residues 41–57 (SAASVKSSSSDTGSRSS) the composition is skewed to low complexity. Positions 59 to 68 (PLPPPPPPPH) are enriched in pro residues. Residue Arg96 is modified to Omega-N-methylarginine. The span at 98-110 (SGAGGAGGPGTPG) shows a compositional bias: gly residues. A Ras-associating domain is found at 141–253 (PPGVLKIFAS…RRFELRGREE (113 aa)). A disordered region spans residues 261–352 (AFGAADADGT…MAPGAADAQM (92 aa)). Residues Ser274 and Ser286 each carry the phosphoserine modification. The segment covering 284–295 (AASGGAALASPG) has biased composition (low complexity). Positions 296 to 307 (PGSGSGTPTGSG) are enriched in gly residues. The segment covering 314–327 (NLSLRRSVSELSLQ) has biased composition (low complexity). 4 positions are modified to phosphoserine: Ser320, Ser322, Ser325, and Ser413. Residues 594 to 895 (GRLARLIKEA…PPAERDAVDT (302 aa)) enclose the Dilute domain.

As to quaternary structure, interacts with Ras family members that have been activated by GTP binding. Interacts with HRAS, RAP1A, RAP2, RRAS, RAF1 and RRAS2. Interacts with MYH9 and ARHGAP29. As to expression, detected in kidney, heart, skeletal muscle, small intestine and lung.

The protein localises to the cytoplasm. It is found in the perinuclear region. Its subcellular location is the golgi apparatus. The protein resides in the golgi stack. Required for the proper formation of vascular structures that develop via both vasculogenesis and angiogenesis. Acts as a critical and vascular-specific regulator of GTPase signaling, cell architecture, and adhesion, which is essential for endothelial cell morphogenesis and blood vessel tubulogenesis. Regulates the activity of Rho GTPases in part by recruiting ARHGAP29 and suppressing RhoA signaling and dampening ROCK and MYH9 activities in endothelial cells. May act as effector for Golgi-bound HRAS and other Ras-like proteins. May promote HRAS-mediated transformation. Negative regulator of amino acid starvation-induced autophagy. This is Ras-interacting protein 1 (Rasip1) from Mus musculus (Mouse).